Here is a 237-residue protein sequence, read N- to C-terminus: Synapse differentiation-inducing gene protein 1-like (237 aa).

3 disordered regions span residues 1-23 (MESL…HRPY), 84-111 (AGSC…PGQA), and 127-148 (ELQG…ESEC). Topologically, residues 1–161 (MESLSELQNP…FLTLPPRDHL (161 aa)) are extracellular. Residues 129 to 148 (QGQEDSQEEESDGTSSESEC) show a composition bias toward acidic residues. Residues 162-182 (GLTLFSMLCCFWPLGIAAFYF) traverse the membrane as a helical segment. The Cytoplasmic portion of the chain corresponds to 183-204 (SQGTSKAISKGDFRLASTTSRR). A helical membrane pass occupies residues 205–225 (ALFLATLSIAVGAGLYVAVVV). The Extracellular portion of the chain corresponds to 226–237 (ALAAYMSQNGHG).

Belongs to the CD225/Dispanin family. As to expression, expression is restricted to the caudate-putamen. Down-regulated in R6/2 transgenic mice, a model for Huntington disease.

Its subcellular location is the membrane. It is found in the golgi apparatus. The protein resides in the cis-Golgi network. The chain is Synapse differentiation-inducing gene protein 1-like (Syndig1l) from Mus musculus (Mouse).